Reading from the N-terminus, the 812-residue chain is Plasminogen (812 aa).

Residues 1-19 (MDHKEVILLFLLLLKPGQG) form the signal peptide. Residues 20-98 (DSLDGYISTQ…RDVILFEKRV (79 aa)) form the PAN domain. 21 cysteine pairs are disulfide-bonded: C49–C73, C53–C61, C103–C181, C124–C164, C152–C176, C185–C262, C188–C316, C206–C245, C234–C257, C275–C352, C296–C335, C324–C347, C377–C454, C398–C437, C426–C449, C481–C560, C502–C543, C531–C555, C568–C687, C578–C586, and C609–C625. Kringle domains lie at 103-181 (CKTG…IPEC), 184-262 (ECMY…IPRC), 275-352 (CLKG…IPSC), 377-454 (CYQS…LKRC), and 481-560 (CMYG…IPLC). Positions 582–810 (VVGGCVANPH…FVDWIEREMR (229 aa)) constitute a Peptidase S1 domain. S598 bears the Phosphoserine mark. Catalysis depends on charge relay system residues H624 and D667. At S690 the chain carries Phosphoserine. 3 cysteine pairs are disulfide-bonded: C701–C768, C731–C747, and C758–C786. The active-site Charge relay system is S762.

This sequence belongs to the peptidase S1 family. Plasminogen subfamily. As to quaternary structure, interacts (both mature PLG and the angiostatin peptide) with AMOT and CSPG4. Interacts (via the Kringle domains) with HRG; the interaction tethers PLG to the cell surface and enhances its activation. Interacts (via Kringle 4 domain) with ADA; the interaction stimulates PLG activation when in complex with DPP4. Angiostatin: Interacts with ATP5F1A; the interaction inhibits most of the angiogenic effects of angiostatin. In the presence of the inhibitor, the activation involves only cleavage after Arg-581, yielding two chains held together by two disulfide bonds. In the absence of the inhibitor, the activation involves additionally the removal of the activation peptide.

It is found in the secreted. The catalysed reaction is Preferential cleavage: Lys-|-Xaa &gt; Arg-|-Xaa, higher selectivity than trypsin. Converts fibrin into soluble products.. With respect to regulation, converted into plasmin by plasminogen activators, both plasminogen and its activator being bound to fibrin. Cannot be activated with streptokinase. Plasmin dissolves the fibrin of blood clots and acts as a proteolytic factor in a variety of other processes including embryonic development, tissue remodeling, tumor invasion, and inflammation. In ovulation, weakens the walls of the Graafian follicle. It activates the urokinase-type plasminogen activator, collagenases and several complement zymogens, such as C1, C4 and C5. Cleavage of fibronectin and laminin leads to cell detachment and apoptosis. Also cleaves fibrin, thrombospondin and von Willebrand factor. Its role in tissue remodeling and tumor invasion may be modulated by CSPG4. Binds to cells. Functionally, angiostatin is an angiogenesis inhibitor that blocks neovascularization and growth of experimental primary and metastatic tumors in vivo. The chain is Plasminogen (Plg) from Mus musculus (Mouse).